The sequence spans 585 residues: Frizzled-10 (585 aa).

The N-terminal stretch at 1 to 24 (MGPAAGNLVRAVLALCWLAEHCAG) is a signal peptide. The Extracellular portion of the chain corresponds to 25-229 (ISSIDIERPG…DVYWSKDDKQ (205 aa)). The 122-residue stretch at 33–154 (PGDGRCQPIE…NDPNYLCMEA (122 aa)) folds into the FZ domain. Intrachain disulfides connect cysteine 38-cysteine 99, cysteine 46-cysteine 92, cysteine 83-cysteine 121, cysteine 110-cysteine 151, and cysteine 114-cysteine 138. The N-linked (GlcNAc...) asparagine glycan is linked to asparagine 52. Positions 155-195 (PNNGSDEPPRGSSMLPPMFRPQRPSTGHDLQQHKDSLSRTS) are disordered. N-linked (GlcNAc...) asparagine glycosylation occurs at asparagine 157. A helical membrane pass occupies residues 230–250 (FAVIWIAIWSILCFFSSAFTV). Residues 251-265 (LTFLIDPQRFKYPER) lie on the Cytoplasmic side of the membrane. A helical membrane pass occupies residues 266–286 (PIIFLSMCYCVYSVGYIIRLF). The Extracellular portion of the chain corresponds to 287–314 (SGAESIACDRDSGQLYVIQEGLESTGCT). Residues 315-335 (IVFLVLYYFGMASSLWWVILT) traverse the membrane as a helical segment. Residues 336–355 (LTWFLAAGKKWGHEAIEANS) are Cytoplasmic-facing. Residues 356 to 376 (SYFHLAAWAIPAVKTIMILVM) traverse the membrane as a helical segment. Residues 377-397 (RRVAGDELTGLCYVGSMDVNA) lie on the Extracellular side of the membrane. The helical transmembrane segment at 398–418 (LTGFVLIPLACYLIIGTSFIL) threads the bilayer. Residues 419–447 (SGFVALFHIRRVMKTGGENTDKLEKLMVR) lie on the Cytoplasmic side of the membrane. Residues 448–468 (IGVFSVLYTVPATCVIACYFY) traverse the membrane as a helical segment. At 469–506 (ERLNMDYWKIVASQQKCKMNNQTKNLDCMMNNSIPAVE) the chain is on the extracellular side. N-linked (GlcNAc...) asparagine glycosylation is found at asparagine 489 and asparagine 499. Residues 507–527 (IFMVKIFMLLVVGITSGMWIW) form a helical membrane-spanning segment. Residues 528-585 (TSKTLQSWQNVCSRRLKKRSRRKPASVITSSGIYKKPQHPQKTHLAKYESTLQPPTCV) lie on the Cytoplasmic side of the membrane. Residues 530–535 (KTLQSW) carry the Lys-Thr-X-X-X-Trp motif, mediates interaction with the PDZ domain of Dvl family members motif. A PDZ-binding motif is present at residues 583–585 (TCV).

This sequence belongs to the G-protein coupled receptor Fz/Smo family. As to quaternary structure, interacts with WNT7A. As to expression, expressed in the dorsal ectoderm overlying the developing spinal cord.

It is found in the cell membrane. Its function is as follows. Receptor for Wnt proteins. Functions in the canonical Wnt/beta-catenin signaling pathway. Activation by WNT7A induces expression of beta-catenin target genes. The canonical Wnt/beta-catenin signaling pathway leads to the activation of disheveled proteins, inhibition of GSK-3 kinase, nuclear accumulation of beta-catenin and activation of Wnt target genes. A second signaling pathway involving PKC and calcium fluxes has been seen for some family members, but it is not yet clear if it represents a distinct pathway or if it can be integrated in the canonical pathway, as PKC seems to be required for Wnt-mediated inactivation of GSK-3 kinase. Both pathways seem to involve interactions with G-proteins. May be involved in transduction and intercellular transmission of polarity information during tissue morphogenesis and/or in differentiated tissues. In Gallus gallus (Chicken), this protein is Frizzled-10 (FZD10).